The chain runs to 505 residues: Maturase K (505 aa).

Belongs to the intron maturase 2 family. MatK subfamily.

Its subcellular location is the plastid. The protein localises to the chloroplast. In terms of biological role, usually encoded in the trnK tRNA gene intron. Probably assists in splicing its own and other chloroplast group II introns. The sequence is that of Maturase K from Blitum bonus-henricus (Good King Henry).